The chain runs to 447 residues: Crotonyl-CoA reductase (447 aa).

Belongs to the zinc-containing alcohol dehydrogenase family. Crotonyl-CoA carboxylase/reductase subfamily. As to quaternary structure, homodimer.

It catalyses the reaction butanoyl-CoA + NADP(+) = (2E)-butenoyl-CoA + NADPH + H(+). Its activity is regulated as follows. Inhibited by divalent cations (30-100%), beta-chloromercuribenzoate (85%), iodoacetamide (40%) and N-ethylmaleamide (80%). The presence of CoA thioesters containing 12-20 carbon atoms results in inhibition of enzyme activity. The greatest degree of inhibition is observed in the presence of palmitoyl-CoA and myristoyl-CoA. The branched-chain fatty acids, isopalmitoyl-CoA and isomyristoyl-CoA are less effective inhibitors of the crotonyl-CoA reductase. Concentrations of NADPH above 200 uM lead to inhibition of enzyme activity. Functionally, may play a role in supplying butyryl-CoA for straight-chain fatty acid biosynthesis. Catalyzes the conversion of crotonyl-CoA to butyryl-CoA. It shows a high substrate specificity for crotonyl-CoA, a short-chain-length (C4), but no measurable activity is observed with shorter (C3) or longer-chain-length enoyl-CoA thioesters. The protein is Crotonyl-CoA reductase (ccr) of Streptomyces collinus.